The primary structure comprises 251 residues: MYRARAARAGPEPGSPGRFGILSTGQLRDLLQDEPKLDRIVRLSRKFQGLQLEREACLASNYALAKENLALRPRLEMGRAALAIKYQELREVAENCADKLQRLEESMHRWSPHCALGWLQAELEEAEQEAEEQMEQLLLGEQSLEAFLPAFQRGRALAHLRRTQAEKLQELLRRRERSAQPAPTSAADPPKSFPAAAVLPTGAARGPPAVPRSLPPLDSRPVPPLKGSPGCPLGPAPLLSPRPSQPEPPHR.

Residues 93 to 182 enclose the VPS37 C-terminal domain; it reads AENCADKLQR…RRRERSAQPA (90 aa). Residues 174–251 form a disordered region; that stretch reads RRERSAQPAP…RPSQPEPPHR (78 aa). Pro residues predominate over residues 221–251; it reads PVPPLKGSPGCPLGPAPLLSPRPSQPEPPHR.

This sequence belongs to the VPS37 family. In terms of assembly, component of the ESCRT-I complex (endosomal sorting complex required for transport I) which consists of TSG101, VPS28, a VPS37 protein (VPS37A to -D) and MVB12A or MVB12B in a 1:1:1:1 stoichiometry. Interacts with TSG101 and MVB12A. Component of the ESCRT-I complex (endosomal sorting complex required for transport I) which consists of TSG101, VPS28, a VPS37 protein (VPS37A to -D) and UBAP1 in a 1:1:1:1 stoichiometry.

It localises to the late endosome membrane. Component of the ESCRT-I complex, a regulator of vesicular trafficking process. Required for the sorting of endocytic ubiquitinated cargos into multivesicular bodies. May be involved in cell growth and differentiation. This is Vacuolar protein sorting-associated protein 37D from Homo sapiens (Human).